A 302-amino-acid chain; its full sequence is Recombination-associated protein RdgC (302 aa).

This sequence belongs to the RdgC family.

It is found in the cytoplasm. The protein localises to the nucleoid. Functionally, may be involved in recombination. In Xylella fastidiosa (strain 9a5c), this protein is Recombination-associated protein RdgC.